The chain runs to 346 residues: tRNA N6-adenosine threonylcarbamoyltransferase (346 aa).

Residues His111 and His115 each contribute to the Fe cation site. Residues Leu134 to Gly138, Asp167, Gly180, and Asn277 each bind substrate. Asp305 is a Fe cation binding site.

This sequence belongs to the KAE1 / TsaD family. Fe(2+) is required as a cofactor.

It is found in the cytoplasm. The enzyme catalyses L-threonylcarbamoyladenylate + adenosine(37) in tRNA = N(6)-L-threonylcarbamoyladenosine(37) in tRNA + AMP + H(+). In terms of biological role, required for the formation of a threonylcarbamoyl group on adenosine at position 37 (t(6)A37) in tRNAs that read codons beginning with adenine. Is involved in the transfer of the threonylcarbamoyl moiety of threonylcarbamoyl-AMP (TC-AMP) to the N6 group of A37, together with TsaE and TsaB. TsaD likely plays a direct catalytic role in this reaction. This chain is tRNA N6-adenosine threonylcarbamoyltransferase, found in Bordetella pertussis (strain Tohama I / ATCC BAA-589 / NCTC 13251).